A 247-amino-acid chain; its full sequence is Transcription factor otaR1 (247 aa).

2 disordered regions span residues 1 to 48 (MEPA…ETSM) and 100 to 143 (DNAS…PLGN). The segment covering 23-47 (DESSSTGLSLGSLLSSSNDLSSETS) has biased composition (low complexity). Over residues 134–143 (ANPTSVPLGN) the composition is skewed to polar residues. A basic motif region spans residues 156–196 (KKYHEKYKERNRVAAGKSRQKQVDLIELLQAEQREEERRRK). Residues 156 to 219 (KKYHEKYKER…LDLKQELQHH (64 aa)) form the bZIP domain. Positions 198 to 212 (LERELSQIHKELLDL) are leucine-zipper.

The protein resides in the nucleus. In terms of biological role, transcription factor; part of the gene cluster that mediates the biosynthesis of ochratoxin A (OTA), a mycotoxin demonstrated to have nephrotoxic, immunotoxic, genotoxic, neurotoxic, and teratogenic properties. Positively regulates the expression of the cluster genes otaA, otaB, otaC and otaD, and the subsequent production of OTA. The protein is Transcription factor otaR1 of Aspergillus carbonarius (strain ITEM 5010).